We begin with the raw amino-acid sequence, 55 residues long: Large ribosomal subunit protein bL33 (55 aa).

The segment covering 1 to 11 has biased composition (basic and acidic residues); the sequence is MAKGGREKIKL. The disordered stretch occupies residues 1–27; it reads MAKGGREKIKLESTAGTGHFYTTSKNK. Residues 14–24 show a composition bias toward polar residues; it reads TAGTGHFYTTS.

It belongs to the bacterial ribosomal protein bL33 family.

The sequence is that of Large ribosomal subunit protein bL33 from Dechloromonas aromatica (strain RCB).